The following is a 153-amino-acid chain: CASP-like protein 5B1 (153 aa).

Over Met-1–Gln-20 the chain is Cytoplasmic. A helical transmembrane segment spans residues Leu-21–Thr-41. Residue Ala-42 is a topological domain, extracellular. The helical transmembrane segment at Phe-43–Leu-63 threads the bilayer. The Cytoplasmic segment spans residues Asp-64–Ser-76. A helical transmembrane segment spans residues Ala-77–Ala-97. The Extracellular portion of the chain corresponds to Ser-98–Ala-128. A helical membrane pass occupies residues Ile-129–Leu-149. The Cytoplasmic segment spans residues Leu-150–Leu-153.

The protein belongs to the Casparian strip membrane proteins (CASP) family. Homodimer and heterodimers.

The protein localises to the cell membrane. The polypeptide is CASP-like protein 5B1 (Oryza sativa subsp. indica (Rice)).